A 178-amino-acid polypeptide reads, in one-letter code: Endothelin-2 (178 aa).

An N-terminal signal peptide occupies residues 1–24 (MVAVPTAWCSVALALLLALQEGKG). A propeptide spanning residues 25–46 (QVAAAPDHPAPSPRARGSHLRP) is cleaved from the precursor. 2 disulfide bridges follow: Cys-49-Cys-63 and Cys-51-Cys-59. Positions 70–178 (VNTPGQTAPY…RPMYPRRRKT (109 aa)) are excised as a propeptide. The interval 96 to 111 (CECSSSGDPACATFCH) is endothelin-like. The interval 158–178 (ARQHQEAEREPRPMYPRRRKT) is disordered. Residues 160-169 (QHQEAEREPR) show a composition bias toward basic and acidic residues.

This sequence belongs to the endothelin/sarafotoxin family.

Its subcellular location is the secreted. Endothelins are endothelium-derived vasoconstrictor peptides. This Mustela putorius furo (European domestic ferret) protein is Endothelin-2 (EDN2).